Reading from the N-terminus, the 61-residue chain is Small ribosomal subunit protein uS14B (61 aa).

The Zn(2+) site is built by cysteine 24, cysteine 27, cysteine 40, and cysteine 43.

Belongs to the universal ribosomal protein uS14 family. Zinc-binding uS14 subfamily. As to quaternary structure, part of the 30S ribosomal subunit. Contacts proteins S3 and S10. Zn(2+) is required as a cofactor.

Functionally, binds 16S rRNA, required for the assembly of 30S particles and may also be responsible for determining the conformation of the 16S rRNA at the A site. The polypeptide is Small ribosomal subunit protein uS14B (Levilactobacillus brevis (strain ATCC 367 / BCRC 12310 / CIP 105137 / JCM 1170 / LMG 11437 / NCIMB 947 / NCTC 947) (Lactobacillus brevis)).